The chain runs to 231 residues: Probable cell wall protein ARB_06477 (231 aa).

Positions 1–17 (MRSVLYLLFTAVAAVAA) are cleaved as a signal peptide. The disordered stretch occupies residues 107 to 206 (TPSFMVDGAT…TGMPTSSGAP (100 aa)). A compositionally biased stretch (low complexity) spans 121–204 (TGPTTSRTSM…SSTGMPTSSG (84 aa)). Serine 203 carries GPI-anchor amidated serine lipidation. Residues 204-231 (GAPDPNGAVSLALPGGLLSIVLSLMALL) constitute a propeptide, removed in mature form.

It belongs to the SRP1/TIP1 family. The GPI-anchor is attached to the protein in the endoplasmic reticulum and serves to target the protein to the cell surface. There, the glucosamine-inositol phospholipid moiety is cleaved off and the GPI-modified mannoprotein is covalently attached via its lipidless GPI glycan remnant to the 1,6-beta-glucan of the outer cell wall layer.

The protein resides in the cell membrane. The protein localises to the secreted. Its subcellular location is the cell wall. Probable component of the cell wall. The protein is Probable cell wall protein ARB_06477 of Arthroderma benhamiae (strain ATCC MYA-4681 / CBS 112371) (Trichophyton mentagrophytes).